We begin with the raw amino-acid sequence, 497 residues long: Glycerol kinase (497 aa).

Threonine 12 contacts ADP. Residues threonine 12, threonine 13, and serine 14 each contribute to the ATP site. Threonine 12 lines the sn-glycerol 3-phosphate pocket. An ADP-binding site is contributed by arginine 16. Sn-glycerol 3-phosphate contacts are provided by arginine 82, glutamate 83, tyrosine 134, and aspartate 243. Residues arginine 82, glutamate 83, tyrosine 134, aspartate 243, and glutamine 244 each coordinate glycerol. Residues threonine 265 and glycine 308 each contribute to the ADP site. Residues threonine 265, glycine 308, glutamine 312, and glycine 411 each coordinate ATP. Residue glycine 411 coordinates ADP.

Belongs to the FGGY kinase family.

It catalyses the reaction glycerol + ATP = sn-glycerol 3-phosphate + ADP + H(+). It functions in the pathway polyol metabolism; glycerol degradation via glycerol kinase pathway; sn-glycerol 3-phosphate from glycerol: step 1/1. Its activity is regulated as follows. Inhibited by fructose 1,6-bisphosphate (FBP). Key enzyme in the regulation of glycerol uptake and metabolism. Catalyzes the phosphorylation of glycerol to yield sn-glycerol 3-phosphate. In Allorhizobium ampelinum (strain ATCC BAA-846 / DSM 112012 / S4) (Agrobacterium vitis (strain S4)), this protein is Glycerol kinase.